The following is a 465-amino-acid chain: Neutrophil collagenase (465 aa).

Residues 1 to 20 (MFRLKTLPLLIFLHTQLANA) form the signal peptide. Residues 21 to 100 (FPVPEHLEEK…CGVPDSGDFL (80 aa)) constitute a propeptide, activation peptide. N55 carries an N-linked (GlcNAc...) asparagine glycan. The short motif at 89–96 (PRCGVPDS) is the Cysteine switch element. C91 is a Zn(2+) binding site. N112 carries N-linked (GlcNAc...) asparagine glycosylation. D157 contributes to the Ca(2+) binding site. The Zn(2+) site is built by H167 and D169. Positions 174, 175, 177, and 179 each coordinate Ca(2+). H182 contacts Zn(2+). Residues G189, G191, and D193 each contribute to the Ca(2+) site. A Zn(2+)-binding site is contributed by H195. The Ca(2+) site is built by D197 and E200. H217 serves as a coordination point for Zn(2+). E218 is a catalytic residue. H221 and H227 together coordinate Zn(2+). 4 Hemopexin repeats span residues 276–325 (PKAC…WPFL), 326–372 (PNGL…GFPR), 374–420 (VQAI…FPGV), and 421–464 (NCRV…WLNC). Cysteines 279 and 464 form a disulfide. Ca(2+) is bound at residue D286. 2 residues coordinate Ca(2+): D378 and D425.

This sequence belongs to the peptidase M10A family. Ca(2+) is required as a cofactor. Requires Zn(2+) as cofactor. Neutrophils. Expressed in uterus. Low levels in kidney and muscle.

The protein localises to the cytoplasmic granule. It is found in the secreted. Its subcellular location is the extracellular space. The protein resides in the extracellular matrix. It catalyses the reaction Cleavage of interstitial collagens in the triple helical domain. Unlike EC 3.4.24.7, this enzyme cleaves type III collagen more slowly than type I.. Cannot be activated without removal of the activation peptide. Activated by matrilysin. Its function is as follows. Can degrade fibrillar type I, II, and III collagens. May play a role in the degradation of collagen fibers during uterine involution. This is Neutrophil collagenase (Mmp8) from Mus musculus (Mouse).